A 45-amino-acid polypeptide reads, in one-letter code: Photosystem II reaction center protein K (45 aa).

Residues 1–8 (MFSINFLG) constitute a propeptide that is removed on maturation. A helical membrane pass occupies residues 17-37 (FDPIVDVLPIIPLLFLLLAFV).

Belongs to the PsbK family. In terms of assembly, PSII is composed of 1 copy each of membrane proteins PsbA, PsbB, PsbC, PsbD, PsbE, PsbF, PsbH, PsbI, PsbJ, PsbK, PsbL, PsbM, PsbT, PsbY, PsbZ, Psb30/Ycf12, at least 3 peripheral proteins of the oxygen-evolving complex and a large number of cofactors. It forms dimeric complexes.

The protein localises to the plastid. The protein resides in the chloroplast thylakoid membrane. Its function is as follows. One of the components of the core complex of photosystem II (PSII). PSII is a light-driven water:plastoquinone oxidoreductase that uses light energy to abstract electrons from H(2)O, generating O(2) and a proton gradient subsequently used for ATP formation. It consists of a core antenna complex that captures photons, and an electron transfer chain that converts photonic excitation into a charge separation. The chain is Photosystem II reaction center protein K from Euglena viridis (Cercaria viridis).